We begin with the raw amino-acid sequence, 520 residues long: Nonsense-mediated mRNA decay factor SMG9 (520 aa).

Disordered stretches follow at residues 1–94 (MSES…PAPL), 108–143 (KGPV…QRPT), and 341–360 (KPST…SDEG). An N-acetylserine modification is found at Ser2. Residues Ser2, Ser4, Ser7, Ser32, and Ser53 each carry the phosphoserine modification. The segment covering 36 to 53 (GRERDYIAPWERERRDAS) has biased composition (basic and acidic residues). Composition is skewed to pro residues over residues 78-94 (QPPP…PAPL) and 122-133 (TAPPPPAAPAPP). Residues 342–357 (PSTPSPSHESSSSSGS) are compositionally biased toward low complexity. Ser451 carries the post-translational modification Phosphoserine.

The protein belongs to the SMG9 family. In terms of assembly, self-associates to form homodimers and forms heterodimers with SMG8; these assembly forms may represent SMG1C intermediate forms. Component of the SMG1C complex composed of SMG1, SMG8 and SMG9. Interacts with DHX34; the interaction is RNA-independent. Post-translationally, phosphorylated by SMG1.

Involved in nonsense-mediated decay (NMD) of mRNAs containing premature stop codons. Is recruited by release factors to stalled ribosomes together with SMG1 and SMG8 (forming the SMG1C protein kinase complex) and, in the SMG1C complex, is required for the efficient association between SMG1 and SMG8. Plays a role in brain, heart, and eye development. This Homo sapiens (Human) protein is Nonsense-mediated mRNA decay factor SMG9.